Here is a 364-residue protein sequence, read N- to C-terminus: Medium-wave-sensitive opsin 1 (364 aa).

The interval 1 to 23 (MTQPWGPQMLAGGQPPESHEDST) is disordered. Residues 1-52 (MTQPWGPQMLAGGQPPESHEDSTQASIFTYTNSNSTRGPFEGPNFHIAPRWV) are Extracellular-facing. Positions 17-43 (ESHEDSTQASIFTYTNSNSTRGPFEGP) are required for 11-cis-retinal regeneration. N34 is a glycosylation site (N-linked (GlcNAc...) asparagine). The helical transmembrane segment at 53–77 (YHLTSAWMILVVIASVFTNGLVLVA) threads the bilayer. Topologically, residues 78-89 (TMRFKKLRHPLN) are cytoplasmic. Residues 90-115 (WILVNLAVADLAETVIASTISVVNQF) form a helical membrane-spanning segment. Residues 116–129 (YGYFVLGHPLCVVE) are Extracellular-facing. A disulfide bridge connects residues C126 and C203. The helical transmembrane segment at 130 to 149 (GYTVSLCGITGLWSLAIISW) threads the bilayer. At 150-168 (ERWLVVCKPFGNVRFDAKL) the chain is on the cytoplasmic side. The helical transmembrane segment at 169–192 (AIAGIAFSWIWAAVWTAPPIFGWS) threads the bilayer. Residues 193-218 (RYWPYGLKTSCGPDVFSGTSYPGVQS) are Extracellular-facing. Residues 219 to 246 (YMMVLMVTCCIIPLSVIVLCYLQVWMAI) form a helical membrane-spanning segment. Topologically, residues 247-268 (RTVAKQQKESESTQKAEKEVTR) are cytoplasmic. Residues 269 to 292 (MVVVMVFAYCLCWGPYTFFACFAT) form a helical membrane-spanning segment. Residues 293–300 (AHPGYSFH) are Extracellular-facing. Residues 301 to 325 (PLVAAIPSYFAKSATIYNPIIYVFM) traverse the membrane as a helical segment. K312 is modified (N6-(retinylidene)lysine). Over 326–364 (NRQFRNCILQLFGKKVEDSSELSSASRTEASSVSSVSPA) the chain is Cytoplasmic.

This sequence belongs to the G-protein coupled receptor 1 family. Opsin subfamily. Monomer. Homodimer. Homotetramer. O-glycosylated. Post-translationally, phosphorylated on some or all of the serine and threonine residues present in the C-terminal region. In terms of tissue distribution, expressed in cone photoreceptor cells.

The protein resides in the membrane. In terms of biological role, visual pigments are the light-absorbing molecules that mediate vision. They consist of an apoprotein, opsin, covalently linked to cis-retinal. May increase spectral sensitivity in dim light. This Oryctolagus cuniculus (Rabbit) protein is Medium-wave-sensitive opsin 1 (OPN1MW).